The following is a 469-amino-acid chain: Acetyl-CoA decarbonylase/synthase complex subunit beta 1 (469 aa).

Positions 189, 192, 278, and 280 each coordinate [Ni-Fe-S] cluster.

It belongs to the CdhC family. As to quaternary structure, monomer. The ACDS complex is made up of alpha, epsilon, beta, gamma and delta chains with a probable stoichiometry of (alpha(2)epsilon(2))(4)-beta(8)-(gamma(1)delta(1))(8) (Potential). [Ni-Fe-S] cluster is required as a cofactor.

The catalysed reaction is Co(I)-[corrinoid Fe-S protein] + acetyl-CoA + H(+) = methyl-Co(III)-[corrinoid Fe-S protein] + CO + CoA. It participates in one-carbon metabolism; methanogenesis from acetate. Functionally, part of a complex that catalyzes the reversible cleavage of acetyl-CoA, allowing growth on acetate as sole source of carbon and energy. The alpha-epsilon complex generates CO from CO(2), while the beta subunit (this protein) combines the CO with CoA and a methyl group to form acetyl-CoA. The methyl group, which is incorporated into acetyl-CoA, is transferred to the beta subunit by a corrinoid iron-sulfur protein (the gamma-delta complex). This Methanosarcina acetivorans (strain ATCC 35395 / DSM 2834 / JCM 12185 / C2A) protein is Acetyl-CoA decarbonylase/synthase complex subunit beta 1 (cdhC1).